Consider the following 342-residue polypeptide: SWR1-complex protein 5 (342 aa).

Disordered stretches follow at residues 1-126 (MAPT…PVTI), 142-178 (PRTS…DPDS), and 214-238 (LGEN…RMPR). 2 stretches are compositionally biased toward acidic residues: residues 8 to 20 (LAED…DSDF) and 33 to 43 (ISDDDDEEAGE). Residues 78–87 (GEKRQKKTKT) show a composition bias toward basic residues. Residues 260 to 341 (NLSMASRLQA…RRARMAQAGK (82 aa)) enclose the BCNT-C domain.

It belongs to the SWC5 family. In terms of assembly, component of the SWR1 chromatin remodeling complex.

Its subcellular location is the nucleus. In terms of biological role, component of the SWR1 complex which mediates the ATP-dependent exchange of histone H2A for the H2A variant H2A.Z leading to transcriptional regulation of selected genes by chromatin remodeling. Involved in chromosome stability. This chain is SWR1-complex protein 5 (crc-2), found in Neurospora crassa (strain ATCC 24698 / 74-OR23-1A / CBS 708.71 / DSM 1257 / FGSC 987).